The following is an 844-amino-acid chain: DNA mismatch repair protein MutS (844 aa).

An ATP-binding site is contributed by 610-617; the sequence is GPNMGGKS.

This sequence belongs to the DNA mismatch repair MutS family.

Functionally, this protein is involved in the repair of mismatches in DNA. It is possible that it carries out the mismatch recognition step. This protein has a weak ATPase activity. The protein is DNA mismatch repair protein MutS of Francisella tularensis subsp. novicida (strain U112).